The primary structure comprises 490 residues: Alginate production protein AlgE (490 aa).

Positions M1–A32 are cleaved as a signal peptide. Composition is skewed to polar residues over residues D102–R115 and Q343–N355. Disordered stretches follow at residues D102 to P121 and A331 to N355.

Belongs to the AlgE family.

It is found in the cell outer membrane. It participates in glycan biosynthesis; alginate biosynthesis. In terms of biological role, has non-porin-like, channel-forming properties and probably functions as an alginate permeability pore. The chain is Alginate production protein AlgE (algE) from Pseudomonas aeruginosa (strain ATCC 15692 / DSM 22644 / CIP 104116 / JCM 14847 / LMG 12228 / 1C / PRS 101 / PAO1).